The primary structure comprises 128 residues: L-ectoine synthase (128 aa).

This sequence belongs to the ectoine synthase family.

It catalyses the reaction (2S)-4-acetamido-2-aminobutanoate = L-ectoine + H2O. Its pathway is amine and polyamine biosynthesis; ectoine biosynthesis; L-ectoine from L-aspartate 4-semialdehyde: step 3/3. In terms of biological role, catalyzes the circularization of gamma-N-acetyl-alpha,gamma-diaminobutyric acid (ADABA) to ectoine (1,4,5,6-tetrahydro-2-methyl-4-pyrimidine carboxylic acid), which is an excellent osmoprotectant. In Aliivibrio fischeri (strain MJ11) (Vibrio fischeri), this protein is L-ectoine synthase.